Reading from the N-terminus, the 203-residue chain is MSAEDYKNLPVTVEKPIPVVYDLGNLAAFDSNVLDKNDLDSSNARREEKIKSLTRDNVQLLINQLLSLPMKTTTESVGGTGGQSSVMTLLQLPDPTTDLPREKPLPKAKAMTKWEKFAAKKGIKPKERAGKMIYDEASGEWVPKWGYKGANKKLDDQWLVEVDDKVKGTDNELIDPRTLNRAERKRLVKKNEKQQRRNMKNAL.

Residues 184–203 (RKRLVKKNEKQQRRNMKNAL) form a disordered region.

This sequence belongs to the RRS1 family. As to quaternary structure, component of a hexameric 5S RNP precursor complex, composed of 5S RNA, RRS1, RPF2, RPL5, RPL11A/RPL11B and SYO1; this complex acts as a precursor for ribosome assembly.

It is found in the nucleus. Functionally, required for ribosome biogenesis. The polypeptide is Regulator of ribosome biosynthesis (RRS1) (Saccharomyces cerevisiae (strain ATCC 204508 / S288c) (Baker's yeast)).